The sequence spans 269 residues: Putative carbamate hydrolase RutD (269 aa).

The region spanning 26–144 (VVLLSSGLGG…CFDTRLHLLN (119 aa)) is the AB hydrolase-1 domain.

It belongs to the AB hydrolase superfamily. Hydrolase RutD family.

It carries out the reaction carbamate + 2 H(+) = NH4(+) + CO2. Its function is as follows. Involved in pyrimidine catabolism. May facilitate the hydrolysis of carbamate, a reaction that can also occur spontaneously. The sequence is that of Putative carbamate hydrolase RutD from Caulobacter vibrioides (strain ATCC 19089 / CIP 103742 / CB 15) (Caulobacter crescentus).